The chain runs to 134 residues: Ribosome-binding factor A (134 aa).

Belongs to the RbfA family. Monomer. Binds 30S ribosomal subunits, but not 50S ribosomal subunits or 70S ribosomes.

The protein localises to the cytoplasm. One of several proteins that assist in the late maturation steps of the functional core of the 30S ribosomal subunit. Associates with free 30S ribosomal subunits (but not with 30S subunits that are part of 70S ribosomes or polysomes). Required for efficient processing of 16S rRNA. May interact with the 5'-terminal helix region of 16S rRNA. The polypeptide is Ribosome-binding factor A (Bdellovibrio bacteriovorus (strain ATCC 15356 / DSM 50701 / NCIMB 9529 / HD100)).